The primary structure comprises 716 residues: Pyruvate/proton symporter BtsT (716 aa).

The Cytoplasmic portion of the chain corresponds to 1–5; sequence MDTKK. A helical transmembrane segment spans residues 6–26; it reads IFKHIPWVILGIIGAFCLAVV. At 27–30 the chain is on the periplasmic side; the sequence is ALRR. The helical transmembrane segment at 31 to 51 threads the bilayer; it reads GEHISALWIVVASVSVYLVAY. The Cytoplasmic segment spans residues 52–88; the sequence is RYYSLYIAQKVMKLDPTRATPAVINNDGLNYVPTNRY. Residues 89–109 traverse the membrane as a helical segment; the sequence is VLFGHHFAAIAGAGPLVGPVL. Over 110–119 the chain is Periplasmic; the sequence is AAQMGYLPGT. A helical transmembrane segment spans residues 120–140; sequence LWLLAGVVLAGAVQDFMVLFI. The Cytoplasmic portion of the chain corresponds to 141–163; the sequence is SSRRNGASLGEMIKEEMGPVPGT. The helical transmembrane segment at 164-184 threads the bilayer; it reads IALFGCFLIMIIILAVLALIV. Residues 185-191 lie on the Periplasmic side of the membrane; sequence VKALAES. A helical transmembrane segment spans residues 192–212; sequence PWGVFTVCSTVPIALFMGIYM. At 213–222 the chain is on the cytoplasmic side; that stretch reads RFIRPGRVGE. A helical transmembrane segment spans residues 223–243; sequence VSVIGIVLLVASIYFGGVIAH. At 244 to 257 the chain is on the periplasmic side; that stretch reads DPYWGPALTFKDTT. A helical transmembrane segment spans residues 258–278; sequence ITFALIGYAFVSALLPVWLIL. At 279–282 the chain is on the cytoplasmic side; the sequence is APRD. Residues 283-303 form a helical membrane-spanning segment; that stretch reads YLATFLKIGVIVGLALGIVVL. The Periplasmic segment spans residues 304 to 326; that stretch reads NPELKMPAMTQYIDGTGPLWKGA. A helical transmembrane segment spans residues 327-347; the sequence is LFPFLFITIACGAVSGFHALI. At 348 to 374 the chain is on the cytoplasmic side; that stretch reads SSGTTPKLLANETDARFIGYGAMLMES. A helical transmembrane segment spans residues 375 to 395; the sequence is FVAIMALVAASIIEPGLYFAM. The Periplasmic portion of the chain corresponds to 396–484; sequence NTPPAGLGIT…HVFHKVLPMA (89 aa). A helical membrane pass occupies residues 485–505; that stretch reads DMGFWYHFGILFEALFILTAL. The Cytoplasmic segment spans residues 506–531; it reads DAGTRSGRFMLQDLLGNFIPFLKKTD. The chain crosses the membrane as a helical span at residues 532–552; the sequence is SLVAGIIGTAGCVGLWGYLLY. The Periplasmic portion of the chain corresponds to 553 to 568; that stretch reads QGVVDPLGGVKSLWPL. The helical transmembrane segment at 569-589 threads the bilayer; it reads FGISNQMLAAVALVLGTVVLI. Topologically, residues 590 to 596 are cytoplasmic; sequence KMKRTQY. Residues 597-617 form a helical membrane-spanning segment; sequence IWVTVVPAVWLLICTTWALGL. The Periplasmic portion of the chain corresponds to 618-668; the sequence is KLFSTNPQMEGFFYMASQYKEKIANGTDLTAQQIANMNHIVVNNYTNAGLS. The chain crosses the membrane as a helical span at residues 669 to 689; that stretch reads ILFLIVVYSIIFYGFKTWLAV. The Cytoplasmic segment spans residues 690 to 716; the sequence is RNSDKRTDKETPYVPIPEGGVKISSHH. Residues 696–716 are disordered; that stretch reads TDKETPYVPIPEGGVKISSHH.

This sequence belongs to the peptide transporter carbon starvation (CstA) (TC 2.A.114) family. In terms of assembly, interacts with BtsS and YpdA.

The protein localises to the cell inner membrane. The enzyme catalyses pyruvate(out) + H(+)(out) = pyruvate(in) + H(+)(in). Transport is inhibited by the protonophores 2,4-dinitrophenol (DNP) and carbonyl cyanide m-chlorophenyl hydrazone (CCCP), but not by ionophores such as valinomycin, nonactin and nigericin. Functionally, transports pyruvate with a high affinity and specificity. The process is driven by the proton motive force. Under nutrient limiting conditions, mediates the uptake of pyruvate, thus enabling it to be used as a carbon source for the growth and survival. Part of a nutrient-sensing regulatory network composed of the two-component regulatory systems BtsS/BtsR and YpdA/YpdB, and their respective target proteins, BtsT and YhjX. The polypeptide is Pyruvate/proton symporter BtsT (Escherichia coli (strain K12)).